Consider the following 872-residue polypeptide: Armadillo repeat-containing protein 3 (872 aa).

12 ARM repeats span residues 15-54 (DVFDPLMIESKKAATVVLMLNSPEEEILAKACEAIYKFAL), 57-96 (EENKTTLLELGAVEPLTKLLTHEDKIVRRNATMIFGILAS), 98-138 (NDVK…NMSA), 140-179 (YTSKVQIFEHGGLEPLIRLLSSPDPDVKKNSMECIYNLVQ), 181-220 (FQCRAKLQELNAIPPILDLLKSEYPVIQLLALKTLGVIAN), 222-262 (KESR…NCLE), 264-304 (MDTM…KAAY), 306-345 (PENRKLFHEQEVEKCLVALLGSENDGTKIAASQAISAMCE), 346-385 (NSGSKDFFNNQGIPQLIQLLKSDNEEVREAAALALANLTT), 388-427 (PANANAAAEADGIDPLINLLSSKRDGAIANAATVLTNMAM), 429-468 (EPLRLNIQNHDIMHAIISPLRSANTVVQSKAALAVTATAC), and 470-509 (VEARTELRNSGGLEPLVELLRSKNDEVRKHASWAVMVCAG). Residues cysteine 507 and cysteine 518 are each lipidated (S-palmitoyl cysteine). A disordered region spans residues 610–693 (VSPPSSMEDK…SKGKKEEEKV (84 aa)). Residues 626-635 (RSISSSSSLR) show a composition bias toward low complexity. The span at 636 to 646 (RSSKEKNKKNS) shows a compositional bias: basic residues. The segment covering 675-693 (ATKEKGWRKSKGKKEEEKV) has biased composition (basic and acidic residues).

Homodimer. Interacts with PIK3C3, PIK3R4 and BECN1. Interacts (via ARM domains) with ATG14. Post-translationally, palmitoylation is important for its function in autophagy. In terms of tissue distribution, expressed in skeletal muscle, brain, lung, kidney, prostate and testis. As to expression, mainly expressed in skeletal muscle, liver, spleen and thymus. Expressed only in the testis among normal tissues but is expressed frequently in various cancer tissues and, particularly, in pancreatic, lung and endometrial cancers.

Functionally, essential for male fertility and sperm motility. During spermatogenesis, promotes the autophagic degradation of excessive ribosomes, providing energy resources for mitochondria and thus ensuring sperm flagellar motility. This Homo sapiens (Human) protein is Armadillo repeat-containing protein 3 (ARMC3).